We begin with the raw amino-acid sequence, 31 residues long: Cytochrome b6-f complex subunit 6 (31 aa).

Residues 4–24 form a helical membrane-spanning segment; the sequence is IFSYIALLLSALVITLTCYIG.

Belongs to the PetL family. As to quaternary structure, the 4 large subunits of the cytochrome b6-f complex are cytochrome b6, subunit IV (17 kDa polypeptide, PetD), cytochrome f and the Rieske protein, while the 4 small subunits are PetG, PetL, PetM and PetN. The complex functions as a dimer.

It is found in the plastid. The protein resides in the chloroplast thylakoid membrane. Component of the cytochrome b6-f complex, which mediates electron transfer between photosystem II (PSII) and photosystem I (PSI), cyclic electron flow around PSI, and state transitions. PetL is important for photoautotrophic growth as well as for electron transfer efficiency and stability of the cytochrome b6-f complex. The protein is Cytochrome b6-f complex subunit 6 of Chlorella vulgaris (Green alga).